The sequence spans 365 residues: Probable cinnamyl alcohol dehydrogenase (365 aa).

Cys-47 provides a ligand contact to Zn(2+). Thr-49 serves as a coordination point for NADP(+). Zn(2+)-binding residues include His-69, Glu-70, Cys-100, Cys-103, Cys-106, Cys-114, and Cys-163. NADP(+) contacts are provided by residues Thr-167, 188-193 (GLGGVG), 211-216 (SSSSKK), Thr-251, Gly-275, and 298-300 (SFI).

It belongs to the zinc-containing alcohol dehydrogenase family. In terms of assembly, homodimer. The cofactor is Zn(2+).

It catalyses the reaction (E)-cinnamyl alcohol + NADP(+) = (E)-cinnamaldehyde + NADPH + H(+). The enzyme catalyses (E)-coniferol + NADP(+) = (E)-coniferaldehyde + NADPH + H(+). It carries out the reaction (E)-sinapyl alcohol + NADP(+) = (E)-sinapaldehyde + NADPH + H(+). The catalysed reaction is (E)-4-coumaroyl alcohol + NADP(+) = (E)-4-coumaraldehyde + NADPH + H(+). It catalyses the reaction (E)-caffeyl alcohol + NADP(+) = (E)-caffeyl aldehyde + NADPH + H(+). It participates in aromatic compound metabolism; phenylpropanoid biosynthesis. In terms of biological role, involved in lignin biosynthesis. Catalyzes the final step specific for the production of lignin monomers. Catalyzes the NADPH-dependent reduction of coniferaldehyde, 5-hydroxyconiferaldehyde, sinapaldehyde, 4-coumaraldehyde and caffeyl aldehyde to their respective alcohols. This chain is Probable cinnamyl alcohol dehydrogenase (CAD), found in Saccharum officinarum (Sugarcane).